We begin with the raw amino-acid sequence, 260 residues long: Neuraminyllactose-binding hemagglutinin (260 aa).

Positions 1-27 are cleaved as a signal peptide; that stretch reads MKANNHFKDFAWKKCLLGASVVALLVG. Residue Cys28 is the site of N-palmitoyl cysteine attachment. The S-diacylglycerol cysteine moiety is linked to residue Cys28.

It localises to the cell outer membrane. The protein is Neuraminyllactose-binding hemagglutinin (hpaA) of Helicobacter pylori (strain ATCC 700392 / 26695) (Campylobacter pylori).